Reading from the N-terminus, the 223-residue chain is Ubiquitin-conjugating enzyme E2 S-A (223 aa).

One can recognise a UBC core domain in the interval 11 to 157; it reads HIIRLVYKEV…ARLLTEIHGG (147 aa). The active-site Glycyl thioester intermediate is the C95. The tract at residues 170 to 223 is disordered; that stretch reads QDLASGASASSADPMIPGVLGGAEGPMAKKHAGERDKKLAAKKKLDKKRALRRL. Residues 209–223 are compositionally biased toward basic residues; the sequence is AAKKKLDKKRALRRL.

Belongs to the ubiquitin-conjugating enzyme family.

The catalysed reaction is S-ubiquitinyl-[E1 ubiquitin-activating enzyme]-L-cysteine + [E2 ubiquitin-conjugating enzyme]-L-cysteine = [E1 ubiquitin-activating enzyme]-L-cysteine + S-ubiquitinyl-[E2 ubiquitin-conjugating enzyme]-L-cysteine.. The protein operates within protein modification; protein ubiquitination. Its function is as follows. Catalyzes the covalent attachment of ubiquitin to other proteins. Acts as an essential factor of the anaphase promoting complex/cyclosome (APC/C), a cell cycle-regulated ubiquitin ligase that controls progression through mitosis. Acts by specifically elongating 'Lys-11'-linked polyubiquitin chains initiated by the E2 enzyme ube2c/ubch10 on APC/C substrates, enhancing the degradation of APC/C substrates by the proteasome and promoting mitotic exit. The protein is Ubiquitin-conjugating enzyme E2 S-A (ube2s-a) of Xenopus laevis (African clawed frog).